The chain runs to 191 residues: A-type ATP synthase subunit E 1 (191 aa).

The protein belongs to the V-ATPase E subunit family. Has multiple subunits with at least A(3), B(3), C, D, E, F, H, I and proteolipid K(x).

It is found in the cell membrane. Functionally, component of the A-type ATP synthase that produces ATP from ADP in the presence of a proton gradient across the membrane. This chain is A-type ATP synthase subunit E 1, found in Methanospirillum hungatei JF-1 (strain ATCC 27890 / DSM 864 / NBRC 100397 / JF-1).